The chain runs to 451 residues: Signal recognition particle protein (451 aa).

GTP-binding positions include 107-114 (GLQGSGKT), 190-194 (DTAGR), and 248-251 (TKTD).

This sequence belongs to the GTP-binding SRP family. SRP54 subfamily. Part of the signal recognition particle protein translocation system, which is composed of SRP and FtsY. SRP is a ribonucleoprotein composed of Ffh and a 4.5S RNA molecule.

It is found in the cytoplasm. The enzyme catalyses GTP + H2O = GDP + phosphate + H(+). Functionally, involved in targeting and insertion of nascent membrane proteins into the cytoplasmic membrane. Binds to the hydrophobic signal sequence of the ribosome-nascent chain (RNC) as it emerges from the ribosomes. The SRP-RNC complex is then targeted to the cytoplasmic membrane where it interacts with the SRP receptor FtsY. Interaction with FtsY leads to the transfer of the RNC complex to the Sec translocase for insertion into the membrane, the hydrolysis of GTP by both Ffh and FtsY, and the dissociation of the SRP-FtsY complex into the individual components. This Buchnera aphidicola subsp. Acyrthosiphon pisum (strain APS) (Acyrthosiphon pisum symbiotic bacterium) protein is Signal recognition particle protein.